The primary structure comprises 367 residues: Endopolygalacturonase B (367 aa).

The signal sequence occupies residues 1–17 (MHFQLLGLAALGSLAAA). Positions 18 to 30 (APAPSRTSELVER) are excised as a propeptide. A disulfide bridge connects residues cysteine 34 and cysteine 49. PbH1 repeat units lie at residues 161 to 191 (GNDV…DVSE), 192 to 213 (SNGV…AINS), 214 to 234 (GENI…SIGS), 243 to 264 (VKNV…RIKT), and 272 to 294 (VSGV…VIEQ). Aspartate 206 (proton donor) is an active-site residue. Cysteine 208 and cysteine 224 are disulfide-bonded. Residue histidine 228 is part of the active site. The N-linked (GlcNAc...) asparagine glycan is linked to asparagine 279. Cystine bridges form between cysteine 334–cysteine 339 and cysteine 358–cysteine 367.

This sequence belongs to the glycosyl hydrolase 28 family.

The protein resides in the secreted. The enzyme catalyses (1,4-alpha-D-galacturonosyl)n+m + H2O = (1,4-alpha-D-galacturonosyl)n + (1,4-alpha-D-galacturonosyl)m.. Functionally, involved in maceration and soft-rotting of plant tissue. Hydrolyzes the 1,4-alpha glycosidic bonds of de-esterified pectate in the smooth region of the plant cell wall. The polypeptide is Endopolygalacturonase B (pgaB) (Aspergillus flavus (strain ATCC MYA-384 / AF70)).